The following is a 428-amino-acid chain: Adenylosuccinate synthetase (428 aa).

GTP contacts are provided by residues 12 to 18 (GDEGKGK) and 40 to 42 (GHT). The active-site Proton acceptor is Asp-13. 2 residues coordinate Mg(2+): Asp-13 and Gly-40. IMP-binding positions include 13–16 (DEGK), 38–41 (NAGH), Thr-131, Arg-145, Gln-226, Thr-241, and Arg-305. The Proton donor role is filled by His-41. A substrate-binding site is contributed by 301 to 307 (ATTGRKR). Residues Arg-307, 333 to 335 (KLD), and 415 to 417 (SVG) each bind GTP.

The protein belongs to the adenylosuccinate synthetase family. In terms of assembly, homodimer. Requires Mg(2+) as cofactor.

Its subcellular location is the cytoplasm. It carries out the reaction IMP + L-aspartate + GTP = N(6)-(1,2-dicarboxyethyl)-AMP + GDP + phosphate + 2 H(+). The protein operates within purine metabolism; AMP biosynthesis via de novo pathway; AMP from IMP: step 1/2. Functionally, plays an important role in the de novo pathway of purine nucleotide biosynthesis. Catalyzes the first committed step in the biosynthesis of AMP from IMP. This Nitratidesulfovibrio vulgaris (strain DSM 19637 / Miyazaki F) (Desulfovibrio vulgaris) protein is Adenylosuccinate synthetase.